The following is a 336-amino-acid chain: DNA-directed RNA polymerase subunit alpha (336 aa).

Residues 1–226 (MLIAQRPTLS…ELFGLARELN (226 aa)) form an alpha N-terminal domain (alpha-NTD) region. The interval 243–336 (LAADMALPIE…SDDAFGDDEL (94 aa)) is alpha C-terminal domain (alpha-CTD).

This sequence belongs to the RNA polymerase alpha chain family. As to quaternary structure, homodimer. The RNAP catalytic core consists of 2 alpha, 1 beta, 1 beta' and 1 omega subunit. When a sigma factor is associated with the core the holoenzyme is formed, which can initiate transcription.

The enzyme catalyses RNA(n) + a ribonucleoside 5'-triphosphate = RNA(n+1) + diphosphate. DNA-dependent RNA polymerase catalyzes the transcription of DNA into RNA using the four ribonucleoside triphosphates as substrates. This chain is DNA-directed RNA polymerase subunit alpha, found in Renibacterium salmoninarum (strain ATCC 33209 / DSM 20767 / JCM 11484 / NBRC 15589 / NCIMB 2235).